Consider the following 101-residue polypeptide: Synaptobrevin-B (101 aa).

Topologically, residues 1 to 76 (MSNNPNNSGQ…RRQMWCRNMK (76 aa)) are cytoplasmic. Residues 13 to 73 (KTQSILQEVD…VTIRRQMWCR (61 aa)) enclose the v-SNARE coiled-coil homology domain. A helical; Anchor for type IV membrane protein transmembrane segment spans residues 77 to 97 (LQLIIIAVVILVLAVILIPII). The Vesicular portion of the chain corresponds to 98–101 (MKFV).

Belongs to the synaptobrevin family.

The protein localises to the cytoplasmic vesicle. It is found in the secretory vesicle membrane. Functionally, involved in the targeting and/or fusion of transport vesicles to their target membrane. This Dictyostelium discoideum (Social amoeba) protein is Synaptobrevin-B (sybB).